Reading from the N-terminus, the 107-residue chain is Nucleoid-associated protein GOX0603 (107 aa).

It belongs to the YbaB/EbfC family. Homodimer.

The protein resides in the cytoplasm. The protein localises to the nucleoid. In terms of biological role, binds to DNA and alters its conformation. May be involved in regulation of gene expression, nucleoid organization and DNA protection. This is Nucleoid-associated protein GOX0603 from Gluconobacter oxydans (strain 621H) (Gluconobacter suboxydans).